We begin with the raw amino-acid sequence, 31 residues long: Photosystem II reaction center protein T (31 aa).

The helical transmembrane segment at 3 to 23 (ALVYTFLLVGTLGIIFFSIFF) threads the bilayer.

This sequence belongs to the PsbT family. PSII is composed of 1 copy each of membrane proteins PsbA, PsbB, PsbC, PsbD, PsbE, PsbF, PsbH, PsbI, PsbJ, PsbK, PsbL, PsbM, PsbT, PsbY, PsbZ, Psb30/Ycf12, at least 3 peripheral proteins of the oxygen-evolving complex and a large number of cofactors. It forms dimeric complexes.

It is found in the plastid. It localises to the chloroplast thylakoid membrane. Functionally, found at the monomer-monomer interface of the photosystem II (PS II) dimer, plays a role in assembly and dimerization of PSII. PSII is a light-driven water plastoquinone oxidoreductase, using light energy to abstract electrons from H(2)O, generating a proton gradient subsequently used for ATP formation. This chain is Photosystem II reaction center protein T, found in Chlamydomonas reinhardtii (Chlamydomonas smithii).